The sequence spans 459 residues: Cell division protein FtsZ (459 aa).

GTP is bound by residues 25–29, 112–114, Glu143, Arg147, and Asp191; these read GAGSN and GTG. 2 disordered regions span residues 383–405 and 427–459; these read DQAPNSTNDDMEPRVSLTNDAGE and IPERKNVVVGMPDEETKESDIHDIPAFLRKKRD.

Belongs to the FtsZ family. As to quaternary structure, homodimer. Polymerizes to form a dynamic ring structure in a strictly GTP-dependent manner. Interacts directly with several other division proteins.

The protein resides in the cytoplasm. Essential cell division protein that forms a contractile ring structure (Z ring) at the future cell division site. The regulation of the ring assembly controls the timing and the location of cell division. One of the functions of the FtsZ ring is to recruit other cell division proteins to the septum to produce a new cell wall between the dividing cells. Binds GTP and shows GTPase activity. The sequence is that of Cell division protein FtsZ from Rickettsia bellii (strain RML369-C).